Consider the following 203-residue polypeptide: Large ribosomal subunit protein uL22 (203 aa).

Residues 138–167 (PENTQSGALSQQSQAEQPQNDPENGVDSQL) are compositionally biased toward polar residues. The tract at residues 138 to 203 (PENTQSGALS…TVLAQEKEVK (66 aa)) is disordered. Positions 168–177 (SAKTNSTTTA) are enriched in low complexity. Residues 183–196 (ADNSTKNDATNTVL) show a composition bias toward polar residues.

The protein belongs to the universal ribosomal protein uL22 family. In terms of assembly, part of the 50S ribosomal subunit.

In terms of biological role, this protein binds specifically to 23S rRNA; its binding is stimulated by other ribosomal proteins, e.g. L4, L17, and L20. It is important during the early stages of 50S assembly. It makes multiple contacts with different domains of the 23S rRNA in the assembled 50S subunit and ribosome. Its function is as follows. The globular domain of the protein is located near the polypeptide exit tunnel on the outside of the subunit, while an extended beta-hairpin is found that lines the wall of the exit tunnel in the center of the 70S ribosome. The sequence is that of Large ribosomal subunit protein uL22 from Mesomycoplasma hyopneumoniae (strain 7448) (Mycoplasma hyopneumoniae).